Here is a 914-residue protein sequence, read N- to C-terminus: WAG22 antigen (914 aa).

A PE domain is found at 1–93; it reads MSFVIAVPET…GGAYAAAEAA (93 aa). 2 disordered regions span residues 412-431 and 895-914; these read GGSG…AGGA and AGAG…HGLT. Over residues 895-904 the composition is skewed to gly residues; it reads AGAGGAGGLV.

The protein belongs to the mycobacterial PE family. PGRS subfamily.

This Mycobacterium bovis (strain ATCC BAA-935 / AF2122/97) protein is WAG22 antigen (wag22).